Here is a 335-residue protein sequence, read N- to C-terminus: Glycerol-3-phosphate dehydrogenase [NAD(P)+] (335 aa).

Residues Ser-10, Phe-11, Arg-31, and Lys-105 each coordinate NADPH. Residues Lys-105, Gly-136, and Ser-138 each contribute to the sn-glycerol 3-phosphate site. Ala-140 serves as a coordination point for NADPH. Sn-glycerol 3-phosphate contacts are provided by Lys-191, Asp-244, Ser-254, Arg-255, and Asn-256. The Proton acceptor role is filled by Lys-191. Position 255 (Arg-255) interacts with NADPH. Positions 279 and 281 each coordinate NADPH.

The protein belongs to the NAD-dependent glycerol-3-phosphate dehydrogenase family.

The protein resides in the cytoplasm. It catalyses the reaction sn-glycerol 3-phosphate + NAD(+) = dihydroxyacetone phosphate + NADH + H(+). The enzyme catalyses sn-glycerol 3-phosphate + NADP(+) = dihydroxyacetone phosphate + NADPH + H(+). The protein operates within membrane lipid metabolism; glycerophospholipid metabolism. In terms of biological role, catalyzes the reduction of the glycolytic intermediate dihydroxyacetone phosphate (DHAP) to sn-glycerol 3-phosphate (G3P), the key precursor for phospholipid synthesis. In Leptospira interrogans serogroup Icterohaemorrhagiae serovar copenhageni (strain Fiocruz L1-130), this protein is Glycerol-3-phosphate dehydrogenase [NAD(P)+].